Here is a 421-residue protein sequence, read N- to C-terminus: Subtilisin-like protease 2 (421 aa).

The N-terminal stretch at 1–16 is a signal peptide; it reads MQLLNFGLLLLPFVAG. Residues 17–122 constitute a propeptide that is removed on maturation; the sequence is DLAPQPEPLL…VHPDQHVYLA (106 aa). The Inhibitor I9 domain maps to 36-122; that stretch reads QYIVTLKEGL…VHPDQHVYLA (87 aa). Positions 131–421 constitute a Peptidase S8 domain; the sequence is RWGLGYMSSK…ERKFTLPKYY (291 aa). Residues Asp-169 and His-201 each act as charge relay system in the active site. 3 N-linked (GlcNAc...) asparagine glycosylation sites follow: Asn-248, Asn-261, and Asn-348. Ser-357 acts as the Charge relay system in catalysis. The N-linked (GlcNAc...) asparagine glycan is linked to Asn-388.

It belongs to the peptidase S8 family.

The protein localises to the secreted. Functionally, secreted subtilisin-like serine protease with keratinolytic activity that contributes to pathogenicity. The sequence is that of Subtilisin-like protease 2 (SUB2) from Arthroderma benhamiae (strain ATCC MYA-4681 / CBS 112371) (Trichophyton mentagrophytes).